We begin with the raw amino-acid sequence, 381 residues long: Cobalt-precorrin-5B C(1)-methyltransferase (381 aa).

It belongs to the CbiD family.

The catalysed reaction is Co-precorrin-5B + S-adenosyl-L-methionine = Co-precorrin-6A + S-adenosyl-L-homocysteine. It functions in the pathway cofactor biosynthesis; adenosylcobalamin biosynthesis; cob(II)yrinate a,c-diamide from sirohydrochlorin (anaerobic route): step 6/10. In terms of biological role, catalyzes the methylation of C-1 in cobalt-precorrin-5B to form cobalt-precorrin-6A. The sequence is that of Cobalt-precorrin-5B C(1)-methyltransferase from Clostridium botulinum (strain Alaska E43 / Type E3).